The primary structure comprises 446 residues: MRKHFGTDGIRGRANGIITPELALKVGQAAGVIFQRGDHRHRVVIGKDTRLSGYMIETALVAGFTSVGMDVLLLGPMPTPAVAMLTRSMRADIGVMISASHNPFEDNGIKLFGPDGFKLNDELELEIESLIDGDMRRRLAGSRDLGRAKRIESVHARYIEFAKRTLPRHVTLDGLRVVVDCANGAAYRVAPETLWELGAEVIAIGVEPDGFNINRDVGSTAPESLVQKVRELRADVGIALDGDADRVLIVDEKGQKVDGDQLMAAVARSWKEDERLTQPGLVATIMSNLGLERFINGLGLTLARTAVGDRYVLEHMREHGYNLGGEQSGHIIMSDYATTGDGLVAALQLLSVVKRRNLPVSEVCHCFEPLPQILKNVRFRSGEPLRADSVVTAIAHAKDRLGQSGRLVIRPSGTEPVIRVMAEGDDHALVAEVVDEVVDAVTRAAA.

Residue serine 100 is the Phosphoserine intermediate of the active site. The Mg(2+) site is built by serine 100, aspartate 241, aspartate 243, and aspartate 245. Serine 100 carries the phosphoserine modification.

This sequence belongs to the phosphohexose mutase family. Mg(2+) is required as a cofactor. In terms of processing, activated by phosphorylation.

The catalysed reaction is alpha-D-glucosamine 1-phosphate = D-glucosamine 6-phosphate. Functionally, catalyzes the conversion of glucosamine-6-phosphate to glucosamine-1-phosphate. The protein is Phosphoglucosamine mutase of Methylorubrum populi (strain ATCC BAA-705 / NCIMB 13946 / BJ001) (Methylobacterium populi).